A 317-amino-acid chain; its full sequence is Ribosomal RNA small subunit methyltransferase H (317 aa).

S-adenosyl-L-methionine contacts are provided by residues 30 to 32 (GGH), Asp50, Tyr78, Asp95, and Gln102.

Belongs to the methyltransferase superfamily. RsmH family.

The protein resides in the cytoplasm. The enzyme catalyses cytidine(1402) in 16S rRNA + S-adenosyl-L-methionine = N(4)-methylcytidine(1402) in 16S rRNA + S-adenosyl-L-homocysteine + H(+). Functionally, specifically methylates the N4 position of cytidine in position 1402 (C1402) of 16S rRNA. This Nitrosomonas eutropha (strain DSM 101675 / C91 / Nm57) protein is Ribosomal RNA small subunit methyltransferase H.